A 336-amino-acid polypeptide reads, in one-letter code: Dihydroorotate dehydrogenase (quinone) (336 aa).

Residues 62 to 66 and T86 each bind FMN; that span reads AGLDK. K66 is a binding site for substrate. Residue 111–115 coordinates substrate; that stretch reads NRMGF. Positions 139 and 172 each coordinate FMN. Residue N172 coordinates substrate. S175 serves as the catalytic Nucleophile. N177 provides a ligand contact to substrate. 2 residues coordinate FMN: K217 and T245. A substrate-binding site is contributed by 246–247; sequence NT. FMN-binding positions include G268, G297, and 318–319; that span reads YS.

Belongs to the dihydroorotate dehydrogenase family. Type 2 subfamily. Monomer. It depends on FMN as a cofactor.

It localises to the cell membrane. It carries out the reaction (S)-dihydroorotate + a quinone = orotate + a quinol. Its pathway is pyrimidine metabolism; UMP biosynthesis via de novo pathway; orotate from (S)-dihydroorotate (quinone route): step 1/1. Its function is as follows. Catalyzes the conversion of dihydroorotate to orotate with quinone as electron acceptor. The protein is Dihydroorotate dehydrogenase (quinone) of Klebsiella pneumoniae (strain 342).